We begin with the raw amino-acid sequence, 273 residues long: Undecaprenyl-diphosphatase (273 aa).

The next 7 helical transmembrane spans lie at 39 to 59, 86 to 106, 117 to 137, 146 to 166, 189 to 209, 220 to 240, and 249 to 269; these read SGLT…VVYF, LPFL…LFET, LLIG…DLFG, VTVS…IPGV, FSFL…MLHL, LPLA…VAFL, and IAPF…VILT.

This sequence belongs to the UppP family.

The protein resides in the cell inner membrane. The enzyme catalyses di-trans,octa-cis-undecaprenyl diphosphate + H2O = di-trans,octa-cis-undecaprenyl phosphate + phosphate + H(+). Functionally, catalyzes the dephosphorylation of undecaprenyl diphosphate (UPP). Confers resistance to bacitracin. The chain is Undecaprenyl-diphosphatase from Pelobacter propionicus (strain DSM 2379 / NBRC 103807 / OttBd1).